The sequence spans 252 residues: MQIVVATHNEGKLVEIRRILEEDLGADAENIELVSAGSLHLPDPVETGVTFQENALLKARAVAIRTGLPAVADDSGLIVDVMGNAPGILSARWAGAHGHDKANNALLLAQIEDIPDDKRTARFRCAAALVVPDTETGADVTGGVAADGITVHTTAADGSPAPVHARYAIKSETVELGDMPGRIIREARGEHGFGYDPLFVPDDQPAGRVSTEPDHEGEPLTSAEMTPAEKNAISHRGKALKALVPAIEALLH.

Position 7–12 (7–12) interacts with substrate; it reads THNEGK. D74 acts as the Proton acceptor in catalysis. D74 is a Mg(2+) binding site. Substrate contacts are provided by residues S75 and 193-196; that span reads FGYD. The tract at residues 202 to 229 is disordered; it reads DDQPAGRVSTEPDHEGEPLTSAEMTPAE. Substrate is bound by residues K230 and 235-236; that span reads HR.

It belongs to the HAM1 NTPase family. As to quaternary structure, homodimer. It depends on Mg(2+) as a cofactor.

It carries out the reaction XTP + H2O = XMP + diphosphate + H(+). The catalysed reaction is dITP + H2O = dIMP + diphosphate + H(+). The enzyme catalyses ITP + H2O = IMP + diphosphate + H(+). Its function is as follows. Pyrophosphatase that catalyzes the hydrolysis of nucleoside triphosphates to their monophosphate derivatives, with a high preference for the non-canonical purine nucleotides XTP (xanthosine triphosphate), dITP (deoxyinosine triphosphate) and ITP. Seems to function as a house-cleaning enzyme that removes non-canonical purine nucleotides from the nucleotide pool, thus preventing their incorporation into DNA/RNA and avoiding chromosomal lesions. The polypeptide is dITP/XTP pyrophosphatase (Bifidobacterium longum (strain DJO10A)).